The chain runs to 134 residues: Small ribosomal subunit protein uS8c (134 aa).

Belongs to the universal ribosomal protein uS8 family. As to quaternary structure, part of the 30S ribosomal subunit.

The protein resides in the plastid. It localises to the chloroplast. One of the primary rRNA binding proteins, it binds directly to 16S rRNA central domain where it helps coordinate assembly of the platform of the 30S subunit. This Ipomoea purpurea (Common morning glory) protein is Small ribosomal subunit protein uS8c (rps8).